Reading from the N-terminus, the 366-residue chain is Mannonate dehydratase (366 aa).

Belongs to the mannonate dehydratase family. It depends on Fe(2+) as a cofactor. The cofactor is Mn(2+).

The catalysed reaction is D-mannonate = 2-dehydro-3-deoxy-D-gluconate + H2O. Its pathway is carbohydrate metabolism; pentose and glucuronate interconversion. Catalyzes the dehydration of D-mannonate. This chain is Mannonate dehydratase, found in Streptococcus pneumoniae (strain 70585).